The sequence spans 353 residues: Photosystem II D2 protein (353 aa).

Thr-2 is subject to N-acetylthreonine. Thr-2 is subject to Phosphothreonine. A helical membrane pass occupies residues 41 to 61 (CAYFALGGWFTGTTFVTSWYT). A chlorophyll a-binding site is contributed by His-118. The helical transmembrane segment at 125–141 (GFMLRQFELARSVQLRP) threads the bilayer. 2 residues coordinate pheophytin a: Gln-130 and Asn-143. Residues 153-166 (VFVSVFLIYPLGQS) traverse the membrane as a helical segment. His-198 provides a ligand contact to chlorophyll a. Residues 208–228 (AALLCAIHGATVENTLFEDGD) traverse the membrane as a helical segment. The a plastoquinone site is built by His-215 and Phe-262. Residue His-215 coordinates Fe cation. Residue His-269 participates in Fe cation binding. The chain crosses the membrane as a helical span at residues 279 to 295 (GLWMSAIGVVGLALNLR).

Belongs to the reaction center PufL/M/PsbA/D family. PSII is composed of 1 copy each of membrane proteins PsbA, PsbB, PsbC, PsbD, PsbE, PsbF, PsbH, PsbI, PsbJ, PsbK, PsbL, PsbM, PsbT, PsbX, PsbY, PsbZ, Psb30/Ycf12, at least 3 peripheral proteins of the oxygen-evolving complex and a large number of cofactors. It forms dimeric complexes. The cofactor is The D1/D2 heterodimer binds P680, chlorophylls that are the primary electron donor of PSII, and subsequent electron acceptors. It shares a non-heme iron and each subunit binds pheophytin, quinone, additional chlorophylls, carotenoids and lipids. There is also a Cl(-1) ion associated with D1 and D2, which is required for oxygen evolution. The PSII complex binds additional chlorophylls, carotenoids and specific lipids..

The protein resides in the plastid. It localises to the chloroplast thylakoid membrane. The enzyme catalyses 2 a plastoquinone + 4 hnu + 2 H2O = 2 a plastoquinol + O2. Its function is as follows. Photosystem II (PSII) is a light-driven water:plastoquinone oxidoreductase that uses light energy to abstract electrons from H(2)O, generating O(2) and a proton gradient subsequently used for ATP formation. It consists of a core antenna complex that captures photons, and an electron transfer chain that converts photonic excitation into a charge separation. The D1/D2 (PsbA/PsbD) reaction center heterodimer binds P680, the primary electron donor of PSII as well as several subsequent electron acceptors. D2 is needed for assembly of a stable PSII complex. The sequence is that of Photosystem II D2 protein from Oryza nivara (Indian wild rice).